Here is a 445-residue protein sequence, read N- to C-terminus: Phosphoglucosamine mutase (445 aa).

Ser102 serves as the catalytic Phosphoserine intermediate. The Mg(2+) site is built by Ser102, Asp241, Asp243, and Asp245. Position 102 is a phosphoserine (Ser102).

Belongs to the phosphohexose mutase family. Mg(2+) serves as cofactor. Activated by phosphorylation.

It catalyses the reaction alpha-D-glucosamine 1-phosphate = D-glucosamine 6-phosphate. Its function is as follows. Catalyzes the conversion of glucosamine-6-phosphate to glucosamine-1-phosphate. The chain is Phosphoglucosamine mutase from Salmonella paratyphi A (strain ATCC 9150 / SARB42).